The sequence spans 634 residues: DNA-directed RNA polymerase subunit gamma (634 aa).

Zn(2+) contacts are provided by cysteine 74, cysteine 76, cysteine 89, and cysteine 92. The Mg(2+) site is built by aspartate 471, aspartate 473, and aspartate 475.

It belongs to the RNA polymerase beta' chain family. RpoC1 subfamily. In terms of assembly, in cyanobacteria the RNAP catalytic core is composed of 2 alpha, 1 beta, 1 beta', 1 gamma and 1 omega subunit. When a sigma factor is associated with the core the holoenzyme is formed, which can initiate transcription. Mg(2+) is required as a cofactor. The cofactor is Zn(2+).

The catalysed reaction is RNA(n) + a ribonucleoside 5'-triphosphate = RNA(n+1) + diphosphate. Functionally, DNA-dependent RNA polymerase catalyzes the transcription of DNA into RNA using the four ribonucleoside triphosphates as substrates. The chain is DNA-directed RNA polymerase subunit gamma from Prochlorococcus marinus (strain MIT 9215).